A 385-amino-acid polypeptide reads, in one-letter code: Isocitrate dehydrogenase [NAD] subunit beta, mitochondrial (385 aa).

Residues 1–33 constitute a mitochondrion transit peptide; that stretch reads MAALSRVRWLTRALVAAPNPGAWRSLCTSTVAQ. Lysine 199 is subject to N6-acetyllysine.

The protein belongs to the isocitrate and isopropylmalate dehydrogenases family. Heterooligomer of subunits alpha (IDH3A), beta (IDH3B), and gamma (IDH3G) in the apparent ratio of 2:1:1. The heterodimer containing one IDH3A and one IDH3B subunit and the heterodimer containing one IDH3A and one IDH3G subunit assemble into a heterotetramer (which contains two subunits of IDH3A, one of IDH3B and one of IDH3G) and further into the heterooctamer. Isoform A is predominant in heart muscle; also found in brain, kidney and liver. Isoform B is present in kidney and liver.

The protein localises to the mitochondrion. The heterotetramer and the heterodimer composed of IDH3A and IDH3G subunits can be allosterically activated by citrate (CIT) or/and ADP, and the two activators can act independently or synergistically. The heterodimer composed of IDH3A and IDH3B subunits cannot be allosterically regulated and the allosteric regulation of the heterotetramer is through the IDH3G subunit and not the IDH3B subunit. The IDH3G subunit contains the allosteric site which consists of a CIT-binding site and an ADP-binding site, and the binding of CIT and ADP causes conformational changes at the allosteric site which are transmitted to the active site in the catalytic subunit (IDH3A) through a cascade of conformational changes at the heterodimer interface, leading to stabilization of the isocitrate-binding at the active site and thus activation of the enzyme. ATP can activate the heterotetramer and the heterodimer composed of IDH3A and IDH3G subunits at low concentrations but inhibits their activities at high concentrations, whereas ATP exhibits only inhibitory effect on the heterodimer composed of IDH3A and IDH3B subunits. Plays a structural role to facilitate the assembly and ensure the full activity of the enzyme catalyzing the decarboxylation of isocitrate (ICT) into alpha-ketoglutarate. The heterodimer composed of the alpha (IDH3A) and beta (IDH3B) subunits and the heterodimer composed of the alpha (IDH3A) and gamma (IDH3G) subunits, have considerable basal activity but the full activity of the heterotetramer (containing two subunits of IDH3A, one of IDH3B and one of IDH3G) requires the assembly and cooperative function of both heterodimers. The chain is Isocitrate dehydrogenase [NAD] subunit beta, mitochondrial (IDH3B) from Bos taurus (Bovine).